The sequence spans 176 residues: Jacalin-related lectin 19 (176 aa).

Positions 12–154 constitute a Jacalin-type lectin domain; sequence TVFVGPWGGN…LDSIGFHLSR (143 aa).

Belongs to the jacalin lectin family.

This chain is Jacalin-related lectin 19 (JAL19), found in Arabidopsis thaliana (Mouse-ear cress).